The following is a 376-amino-acid chain: 23S rRNA (uracil(747)-C(5))-methyltransferase RlmC (376 aa).

[4Fe-4S] cluster contacts are provided by C3, C11, C14, and C88. The S-adenosyl-L-methionine site is built by Q213, F242, E263, and N308. The active-site Nucleophile is the C335.

Belongs to the class I-like SAM-binding methyltransferase superfamily. RNA M5U methyltransferase family. RlmC subfamily.

It carries out the reaction uridine(747) in 23S rRNA + S-adenosyl-L-methionine = 5-methyluridine(747) in 23S rRNA + S-adenosyl-L-homocysteine + H(+). In terms of biological role, catalyzes the formation of 5-methyl-uridine at position 747 (m5U747) in 23S rRNA. The sequence is that of 23S rRNA (uracil(747)-C(5))-methyltransferase RlmC from Vibrio vulnificus (strain CMCP6).